Reading from the N-terminus, the 210-residue chain is Na(+)-translocating NADH-quinone reductase subunit D (210 aa).

The next 6 helical transmembrane spans lie at 10–30 (ILFA…GVCS), 42–62 (FVMT…VSLI), 72–92 (IIVQ…VLKA), 103–123 (VFVG…AYAM), 131–151 (FIDG…VAFF), and 178–198 (NGLM…IWAI).

The protein belongs to the NqrDE/RnfAE family. As to quaternary structure, composed of six subunits; NqrA, NqrB, NqrC, NqrD, NqrE and NqrF.

Its subcellular location is the cell inner membrane. The enzyme catalyses a ubiquinone + n Na(+)(in) + NADH + H(+) = a ubiquinol + n Na(+)(out) + NAD(+). In terms of biological role, NQR complex catalyzes the reduction of ubiquinone-1 to ubiquinol by two successive reactions, coupled with the transport of Na(+) ions from the cytoplasm to the periplasm. NqrA to NqrE are probably involved in the second step, the conversion of ubisemiquinone to ubiquinol. This Photobacterium profundum (strain SS9) protein is Na(+)-translocating NADH-quinone reductase subunit D.